The primary structure comprises 476 residues: Zinc finger protein 563 (476 aa).

A KRAB domain is found at 4–96 (VAFEDVAVNF…IRDSIVNNSI (93 aa)). The segment at 101–125 (DPCQSAECEEVIMGHLSLNSHIRVD) adopts a C2H2-type 1; degenerate zinc-finger fold. A C2H2-type 2; degenerate zinc finger spans residues 169–191 (YECKECGKTFSSRRNLRRHMVVQ). C2H2-type zinc fingers lie at residues 197-219 (YKCKLCGKAFFWPSLLRMHERTH), 225-247 (YECKQCSKAFPFYSSYRRHERMH), 253-275 (YECKQCSKALPDSSSYIRHERTH), 281-303 (YTCKQCGKAFSVSSSLRRHETTH), 309-331 (YECKQCGKTFHHLGSFQIHMKRH), 337-359 (HKCKICGKGFDRPSLVRYHERIH), 365-387 (YECKQCGKTLSHSSSFRRHMIMH), 393-415 (HKCKICGKAFVYPSVCQRHEKSH), 421-443 (YECKQCGKALSHSSSFRRHMVMH), and 449-471 (NKCKVCGKAFVYPSVCQRHEKTH).

This sequence belongs to the krueppel C2H2-type zinc-finger protein family.

The protein localises to the nucleus. In terms of biological role, may be involved in transcriptional regulation. The polypeptide is Zinc finger protein 563 (ZNF563) (Homo sapiens (Human)).